Reading from the N-terminus, the 137-residue chain is Mediator of RNA polymerase II transcription subunit 21 (137 aa).

Residues 37 to 56 (PKDTIAPSKADQPPEVDTLP) are disordered. Residues 87–130 (GLDNSEQDQLQSIKELEEELNVAEKQRQEAVKEKDEVLVKLDQT) adopt a coiled-coil conformation.

It belongs to the Mediator complex subunit 21 family. Component of the Mediator complex.

Its subcellular location is the nucleus. Component of the Mediator complex, a coactivator involved in the regulated transcription of nearly all RNA polymerase II-dependent genes. Mediator functions as a bridge to convey information from gene-specific regulatory proteins to the basal RNA polymerase II transcription machinery. Mediator is recruited to promoters by direct interactions with regulatory proteins and serves as a scaffold for the assembly of a functional preinitiation complex with RNA polymerase II and the general transcription factors. The chain is Mediator of RNA polymerase II transcription subunit 21 (srb-7) from Neurospora crassa (strain ATCC 24698 / 74-OR23-1A / CBS 708.71 / DSM 1257 / FGSC 987).